We begin with the raw amino-acid sequence, 61 residues long: Large ribosomal subunit protein bL32c (61 aa).

Residues 37–61 (SRSFSSGNEHPKPKGFSGQQQQTNK) form a disordered region.

The protein belongs to the bacterial ribosomal protein bL32 family.

The protein localises to the plastid. It localises to the chloroplast. The polypeptide is Large ribosomal subunit protein bL32c (Agrostis stolonifera (Creeping bentgrass)).